The chain runs to 542 residues: Leucine-rich repeat-containing protein 56 (542 aa).

LRR repeat units follow at residues 94-115, 117-138, 139-160, 161-182, and 186-206; these read NLDQLKLNGSHLGSLRDLGTSL, HLQVLWLARCGLADLDGIASLP, ALKELYASYNNISDLSPLCLLE, QLEVLDLEGNSVEDLGQVRYLQ, and RLAMLTLEGNLVCLQPAPGPT. The region spanning 207 to 250 is the LRRCT domain; that stretch reads NKVPRGYNYRAEVRKLIPQLQVLDEVPAAHTGPPAPPRLSQDWL. Disordered stretches follow at residues 308 to 377, 396 to 475, and 507 to 542; these read LLSE…ADSS, LPYR…LQSR, and RLSPRAQGCPGPKPAPDAAARPPRAAELSHPSPVPT. Over residues 416-426 the composition is skewed to basic and acidic residues; the sequence is RVPEEQVHQAE. Residues 522 to 532 show a composition bias toward low complexity; sequence PDAAARPPRAA.

The protein belongs to the LRRC56 family. As to quaternary structure, interacts with IFT88.

It is found in the cell projection. It localises to the cilium. Its function is as follows. Required for the assembly of dynein arms. In Homo sapiens (Human), this protein is Leucine-rich repeat-containing protein 56 (LRRC56).